The following is a 418-amino-acid chain: Serine hydroxymethyltransferase (418 aa).

Residues L121 and 125–127 (GHL) each bind (6S)-5,6,7,8-tetrahydrofolate. K230 is subject to N6-(pyridoxal phosphate)lysine. (6S)-5,6,7,8-tetrahydrofolate is bound at residue 355-357 (SPF).

The protein belongs to the SHMT family. In terms of assembly, homodimer. Pyridoxal 5'-phosphate is required as a cofactor.

The protein localises to the cytoplasm. The enzyme catalyses (6R)-5,10-methylene-5,6,7,8-tetrahydrofolate + glycine + H2O = (6S)-5,6,7,8-tetrahydrofolate + L-serine. It functions in the pathway one-carbon metabolism; tetrahydrofolate interconversion. The protein operates within amino-acid biosynthesis; glycine biosynthesis; glycine from L-serine: step 1/1. Catalyzes the reversible interconversion of serine and glycine with tetrahydrofolate (THF) serving as the one-carbon carrier. This reaction serves as the major source of one-carbon groups required for the biosynthesis of purines, thymidylate, methionine, and other important biomolecules. Also exhibits THF-independent aldolase activity toward beta-hydroxyamino acids, producing glycine and aldehydes, via a retro-aldol mechanism. This is Serine hydroxymethyltransferase from Streptococcus pyogenes serotype M49 (strain NZ131).